A 662-amino-acid polypeptide reads, in one-letter code: 72 kDa type IV collagenase (662 aa).

The N-terminal stretch at 1–29 (MEALGARGALAGFLRALCVLGCLLGRATA) is a signal peptide. A propeptide spans 30 to 109 (PPSPVIKFPG…PRCGNPDVAN (80 aa)) (activation peptide). A Cysteine switch motif is present at residues 100-107 (PRCGNPDV). Residue cysteine 102 coordinates Zn(2+). The interval 110-221 (YNFFPRKPKW…LWTLGEGQVV (112 aa)) is collagenase-like 1. Aspartate 134 and aspartate 168 together coordinate Ca(2+). Zn(2+) contacts are provided by histidine 178 and aspartate 180. Positions 185 and 186 each coordinate Ca(2+). Histidine 193 serves as a coordination point for Zn(2+). Residues glycine 200, glycine 202, and aspartate 204 each contribute to the Ca(2+) site. Residue histidine 206 coordinates Zn(2+). 3 residues coordinate Ca(2+): aspartate 208, aspartate 209, and glutamate 211. The collagen-binding stretch occupies residues 222-396 (RVKYGNADGE…WGFCPDQGYS (175 aa)). 3 Fibronectin type-II domains span residues 228-276 (ADGE…FCPH), 286-334 (ADGQ…FCPE), and 344-392 (SEGA…FCPD). 6 disulfides stabilise this stretch: cysteine 233–cysteine 259, cysteine 247–cysteine 274, cysteine 291–cysteine 317, cysteine 305–cysteine 332, cysteine 349–cysteine 375, and cysteine 363–cysteine 390. The segment at 397-467 (LFLVAAHEFG…GPTPTLGPVT (71 aa)) is collagenase-like 2. Histidine 403 lines the Zn(2+) pocket. Glutamate 404 is a catalytic residue. Residues histidine 407 and histidine 413 each coordinate Zn(2+). The segment at 414-662 (SQDPGALMAP…GSIKTDWLGC (249 aa)) is required for inhibitor TIMP2 binding. Cysteine 471 and cysteine 662 are disulfide-bonded. Hemopexin repeat units lie at residues 474–518 (DIVF…WPEL), 519–565 (PEKI…GLPP), 567–615 (VQRV…WNAI), and 616–662 (PDHL…WLGC). Ca(2+) contacts are provided by aspartate 478, aspartate 523, and aspartate 571. Asparagine 575 is a glycosylation site (N-linked (GlcNAc...) asparagine). Aspartate 620 contacts Ca(2+). An N-linked (GlcNAc...) asparagine glycan is attached at asparagine 644.

The protein belongs to the peptidase M10A family. As to quaternary structure, interacts (via the C-terminal hemopexin-like domains-containing region) with the integrin alpha-V/beta-3; the interaction promotes vascular invasion in angiogenic vessels and melamoma cells. Interacts (via the C-terminal PEX domain) with TIMP2 (via the C-terminal); the interaction inhibits the degradation activity. Interacts with GSK3B. Ca(2+) serves as cofactor. Zn(2+) is required as a cofactor. Post-translationally, phosphorylation on multiple sites modulates enzymatic activity. Phosphorylated by PKC in vitro. The propeptide is processed by MMP14 (MT-MMP1) and MMP16 (MT-MMP3). Autocatalytic cleavage in the C-terminal produces the anti-angiogenic peptide, PEX. This processing appears to be facilitated by binding integrinv/beta3.

It localises to the secreted. The protein localises to the extracellular space. The protein resides in the extracellular matrix. It is found in the membrane. Its subcellular location is the nucleus. It catalyses the reaction Cleavage of gelatin type I and collagen types IV, V, VII, X. Cleaves the collagen-like sequence Pro-Gln-Gly-|-Ile-Ala-Gly-Gln.. In terms of biological role, ubiquitinous metalloproteinase that is involved in diverse functions such as remodeling of the vasculature, angiogenesis, tissue repair, tumor invasion, inflammation, and atherosclerotic plaque rupture. As well as degrading extracellular matrix proteins, can also act on several nonmatrix proteins such as big endothelial 1 and beta-type CGRP promoting vasoconstriction. Also cleaves KISS at a Gly-|-Leu bond. Appears to have a role in myocardial cell death pathways. Contributes to myocardial oxidative stress by regulating the activity of GSK3beta. Cleaves GSK3beta in vitro. Involved in the formation of the fibrovascular tissues. PEX, the C-terminal non-catalytic fragment of MMP2, possesses anti-angiogenic and anti-tumor properties and inhibits cell migration and cell adhesion to FGF2 and vitronectin. Ligand for integrin alpha-v/beta-3 on the surface of blood vessels. The protein is 72 kDa type IV collagenase (MMP2) of Oryctolagus cuniculus (Rabbit).